The following is a 361-amino-acid chain: 24-methylenesterol C-methyltransferase 2 (361 aa).

It belongs to the class I-like SAM-binding methyltransferase superfamily. Erg6/SMT family.

It catalyses the reaction 24-methylidenelophenol + S-adenosyl-L-methionine = (Z)-24-ethylidenelophenol + S-adenosyl-L-homocysteine + H(+). It participates in steroid biosynthesis; sterol biosynthesis. Functionally, catalyzes the methyl transfer from S-adenosyl-methionine to the methylene group of 24-methylene lophenol to form 24-ethylidene lophenol. This Arabidopsis thaliana (Mouse-ear cress) protein is 24-methylenesterol C-methyltransferase 2 (SMT2).